Reading from the N-terminus, the 163-residue chain is Anaerobic nitrite reductase HB1 (163 aa).

A Globin domain is found at 8 to 157 (VFTEEQEALV…LVAAIKIEMK (150 aa)). The Homodimerization motif lies at 41-45 (EIAPS). Heme b contacts are provided by serine 51, lysine 65, histidine 69, lysine 99, threonine 103, and histidine 104. The Homodimerization signature appears at 111–123 (DEHFEVTKFALLE).

This sequence belongs to the plant globin family. Homodimer. It depends on heme b as a cofactor.

It localises to the cytoplasm. The protein localises to the nucleus. The enzyme catalyses Fe(III)-heme b-[protein] + nitric oxide + H2O = Fe(II)-heme b-[protein] + nitrite + 2 H(+). Functionally, phytoglobin that reduces nitrite to nitric oxide (NO) under anoxic conditions (e.g. during flooding or in waterlogged soil). May not function as an oxygen storage or transport protein. Has an unusually high affinity for O(2) through an hexacoordinate heme iron because of a very low dissociation constant. This chain is Anaerobic nitrite reductase HB1, found in Gossypium hirsutum (Upland cotton).